A 198-amino-acid polypeptide reads, in one-letter code: Recombination protein RecR (198 aa).

The segment at 57–72 (CSECQTLTDKDPCAVC) adopts a C4-type zinc-finger fold. The Toprim domain maps to 80 to 175 (RIICVVEGVP…KVTRIAQGIP (96 aa)).

The protein belongs to the RecR family.

May play a role in DNA repair. It seems to be involved in an RecBC-independent recombinational process of DNA repair. It may act with RecF and RecO. The sequence is that of Recombination protein RecR from Anaeromyxobacter sp. (strain Fw109-5).